The primary structure comprises 37 residues: Large ribosomal subunit protein bL36c (37 aa).

Belongs to the bacterial ribosomal protein bL36 family.

Its subcellular location is the plastid. It localises to the chloroplast. The protein is Large ribosomal subunit protein bL36c of Lactuca sativa (Garden lettuce).